Here is a 393-residue protein sequence, read N- to C-terminus: Cyclic GMP-AMP synthase-like receptor 1 (393 aa).

The Mg(2+) site is built by E89, D91, and D205. ATP is bound at residue 89 to 91 (EFD). Residues D205 and 251–258 (RASFYEAE) contribute to the GTP site. Residues 255–258 (YEAE), K276, and 289–293 (SYHIK) each bind ATP.

The protein belongs to the mab-21 family. It depends on Mg(2+) as a cofactor. The cofactor is Mn(2+).

It catalyses the reaction GTP + ATP = 3',2'-cGAMP + 2 diphosphate. The enzyme catalyses GTP + ATP = pppA(2'-5')pG + diphosphate. It carries out the reaction pppA(2'-5')pG = 3',2'-cGAMP + diphosphate. Its activity is regulated as follows. The enzyme activity is specifically activated by double-stranded RNA (dsRNA). Recognizes long dsRNA (&gt;30 bp) with no preference for 5' RNA phosphorylation. Nucleotidyltransferase that catalyzes the formation of cyclic GMP-AMP (3',2'-cGAMP) from ATP and GTP and plays a key role in innate immunity. Synthesizes 3',2'-cGAMP in a two-step reaction through production of the linear intermediate pppA(2'-5')pG. Acts as a key sensor of double-stranded RNA (dsRNA), the presence of dsRNA in the cytoplasm being a danger signal that triggers the immune responses. Directly binds dsRNA longer than 35 bp, activating the nucleotidyltransferase activity, leading to synthesis of 3',2'-cGAMP, a second messenger that binds to and activates Sting, thereby triggering the antiviral immune response via activation of the NF-kappa-B transcription factor Rel (Relish). The sequence is that of Cyclic GMP-AMP synthase-like receptor 1 from Drosophila simulans (Fruit fly).